Reading from the N-terminus, the 128-residue chain is Small ribosomal subunit protein uS11 (128 aa).

The protein belongs to the universal ribosomal protein uS11 family. In terms of assembly, part of the 30S ribosomal subunit. Interacts with proteins S7 and S18. Binds to IF-3.

Its function is as follows. Located on the platform of the 30S subunit, it bridges several disparate RNA helices of the 16S rRNA. Forms part of the Shine-Dalgarno cleft in the 70S ribosome. This chain is Small ribosomal subunit protein uS11, found in Chromohalobacter salexigens (strain ATCC BAA-138 / DSM 3043 / CIP 106854 / NCIMB 13768 / 1H11).